Consider the following 556-residue polypeptide: 2-succinyl-5-enolpyruvyl-6-hydroxy-3-cyclohexene-1-carboxylate synthase (556 aa).

The protein belongs to the TPP enzyme family. MenD subfamily. As to quaternary structure, homodimer. It depends on Mg(2+) as a cofactor. Mn(2+) serves as cofactor. Requires thiamine diphosphate as cofactor.

It catalyses the reaction isochorismate + 2-oxoglutarate + H(+) = 5-enolpyruvoyl-6-hydroxy-2-succinyl-cyclohex-3-ene-1-carboxylate + CO2. It functions in the pathway quinol/quinone metabolism; 1,4-dihydroxy-2-naphthoate biosynthesis; 1,4-dihydroxy-2-naphthoate from chorismate: step 2/7. Its pathway is quinol/quinone metabolism; menaquinone biosynthesis. Catalyzes the thiamine diphosphate-dependent decarboxylation of 2-oxoglutarate and the subsequent addition of the resulting succinic semialdehyde-thiamine pyrophosphate anion to isochorismate to yield 2-succinyl-5-enolpyruvyl-6-hydroxy-3-cyclohexene-1-carboxylate (SEPHCHC). This is 2-succinyl-5-enolpyruvyl-6-hydroxy-3-cyclohexene-1-carboxylate synthase from Staphylococcus haemolyticus (strain JCSC1435).